Here is a 348-residue protein sequence, read N- to C-terminus: MLVDRVENNEKQQQQMASSSDAMSDSSLSDDEIIEHVVHGKEPKSTYELSWVSNAIAWSGALVWPLMLTVPLLLSSMYSPISYRQVFPESWYVYDTLSNCAPKPLGLVLGILAVAVGQVFVWIFFYLFKFGYLGTDPRSIQSKGAREYIFREGLLTHIGQPEGFVLLIGYLAITWMLKLMPQSYYSFEGTIQYKELFMCLVLQDGIQYTMHVLEHIVSPAFYQMSHKPHHRFTNPRLFDAFNGSLMDTFCMIIIPLFVTANLVRHCNVWTYMAFGSSYACWLTLIHSEYVFPWDGIFRKLGLGTPADHHVHHKFFKFNYGHLFMWFDQLGGTYRDPSGFAPRVFRENV.

The span at 1–10 shows a compositional bias: basic and acidic residues; the sequence is MLVDRVENNE. A disordered region spans residues 1-26; that stretch reads MLVDRVENNEKQQQQMASSSDAMSDS. Low complexity predominate over residues 12–26; the sequence is QQQQMASSSDAMSDS. The next 3 helical transmembrane spans lie at 55–75, 105–125, and 153–173; these read AIAWSGALVWPLMLTVPLLLS, LGLVLGILAVAVGQVFVWIFF, and GLLTHIGQPEGFVLLIGYLAI. Residues 197-332 enclose the Fatty acid hydroxylase domain; the sequence is FMCLVLQDGI…FMWFDQLGGT (136 aa). A Histidine box-1 motif is present at residues 211–215; the sequence is HVLEH. The Histidine box-2 signature appears at 226-230; that stretch reads HKPHH. 2 helical membrane-spanning segments follow: residues 243 to 263 and 277 to 297; these read GSLMDTFCMIIIPLFVTANLV and SYACWLTLIHSEYVFPWDGIF. The Histidine box-3 motif lies at 308–312; that stretch reads HHVHH.

It belongs to the sterol desaturase family. Interacts with cytochrome b5/PHATRDRAFT_30770. Requires Fe cation as cofactor.

The protein localises to the endoplasmic reticulum membrane. It carries out the reaction squalene + 2 Fe(II)-[cytochrome b5] + O2 + 2 H(+) = (S)-2,3-epoxysqualene + 2 Fe(III)-[cytochrome b5] + H2O. Its pathway is terpene metabolism; lanosterol biosynthesis; lanosterol from farnesyl diphosphate. With respect to regulation, the activity of this enzyme is not inhibited by terbinafine, an established inhibitor of the conventional flavoprotein squalene epoxidase. Catalyzes the stereospecific epoxidation of squalene at the terminal double bond to form (S)-2,3-epoxysqualene, the first oxygenation step in sterol biosynthesis. This Phaeodactylum tricornutum (strain CCAP 1055/1) protein is Alternative squalene epoxidase.